Reading from the N-terminus, the 329-residue chain is Alpha/beta hydrolase domain-containing protein 17C (329 aa).

The segment covering 53–79 (GASAPAPAQATAAAAAAQPAPQQPEEG) has biased composition (low complexity). Residues 53-85 (GASAPAPAQATAAAAAAQPAPQQPEEGAGAGPG) are disordered. Catalysis depends on charge relay system residues Ser-211, Asp-276, and His-305.

The protein belongs to the AB hydrolase superfamily. ABHD17 family. Palmitoylated on cysteine residues located in a cysteine cluster at the N-terminus which promotes membrane localization. Palmitoylation is required for post-synaptic localization and for depalmitoylating activity towards DLG4/PSD95.

It localises to the recycling endosome membrane. Its subcellular location is the cell projection. The protein resides in the dendritic spine. The protein localises to the postsynaptic density membrane. The enzyme catalyses S-hexadecanoyl-L-cysteinyl-[protein] + H2O = L-cysteinyl-[protein] + hexadecanoate + H(+). Its activity is regulated as follows. Inhibited by palmostatin-B. Functionally, hydrolyzes fatty acids from S-acylated cysteine residues in proteins. Has depalmitoylating activity towards NRAS and DLG4/PSD95. In Homo sapiens (Human), this protein is Alpha/beta hydrolase domain-containing protein 17C.